We begin with the raw amino-acid sequence, 235 residues long: Phosphoribosylaminoimidazole-succinocarboxamide synthase (235 aa).

It belongs to the SAICAR synthetase family.

The catalysed reaction is 5-amino-1-(5-phospho-D-ribosyl)imidazole-4-carboxylate + L-aspartate + ATP = (2S)-2-[5-amino-1-(5-phospho-beta-D-ribosyl)imidazole-4-carboxamido]succinate + ADP + phosphate + 2 H(+). Its pathway is purine metabolism; IMP biosynthesis via de novo pathway; 5-amino-1-(5-phospho-D-ribosyl)imidazole-4-carboxamide from 5-amino-1-(5-phospho-D-ribosyl)imidazole-4-carboxylate: step 1/2. The chain is Phosphoribosylaminoimidazole-succinocarboxamide synthase from Streptococcus pneumoniae (strain 70585).